The sequence spans 306 residues: Cathepsin Z (306 aa).

Positions 1-20 are cleaved as a signal peptide; the sequence is MLAILFNFFLLTYFTNITLG. A propeptide spans 21-65 (activation peptide); the sequence is KVGKSIDLDTRNGYNVHGCYKQTGKIYAHKTYPRQYEAENYNFDD. Intrachain disulfides connect C39–C96, C93–C136, C130–C168, C158–C174, and C177–C182. C96 is an active-site residue. N-linked (GlcNAc...) asparagine glycosylation occurs at N187. A disulfide bridge connects residues C217 and C299. Residues H243 and N265 contribute to the active site. N-linked (GlcNAc...) asparagine glycosylation is present at N286.

This sequence belongs to the peptidase C1 family.

The protein resides in the cytoplasmic vesicle. It localises to the secretory vesicle. It is found in the secreted. The catalysed reaction is Release of C-terminal amino acid residues with broad specificity, but lacks action on C-terminal proline. Shows weak endopeptidase activity.. The disulfide bridge formed between Cys-39 in the propeptide and the active site residue Cys-96 may prevent activation of the zymogen through formation of a reversible covalent bond with the active site residue. Its function is as follows. Exhibits carboxy-monopeptidase as well as carboxy-dipeptidase activity. Plays an essential role in molting, a process during larval stages in which a new cuticle is formed and the old cuticle is shed. Required for the degradation and shedding of the old cuticle. This is Cathepsin Z from Onchocerca volvulus.